The sequence spans 191 residues: Cell division protein SepF (191 aa).

Residues 153 to 178 (FPEEVSPSNISSKKTSPYSLETNTTP) are compositionally biased toward polar residues. A disordered region spans residues 153-191 (FPEEVSPSNISSKKTSPYSLETNTTPEPAWGESKLSAFS).

This sequence belongs to the SepF family. Homodimer. Interacts with FtsZ.

The protein localises to the cytoplasm. Cell division protein that is part of the divisome complex and is recruited early to the Z-ring. Probably stimulates Z-ring formation, perhaps through the cross-linking of FtsZ protofilaments. Its function overlaps with FtsA. The protein is Cell division protein SepF of Prochlorococcus marinus (strain MIT 9515).